The primary structure comprises 595 residues: (E)-beta-ocimene synthase, chloroplastic (595 aa).

Residues 1-32 constitute a chloroplast transit peptide; that stretch reads MSTISINLMSIIRNPLHSKSKRALINKHPSSS. Asp350 and Asp354 together coordinate Mn(2+). A DDXXD motif motif is present at residues 350–354; it reads DDVYD. 2 homodimerization regions span residues 356–362 and 428–465; these read YGTLDEL and EEEWYESGYTPSLKEYLNNASISVGAIAVVIALELSIP. Residues Asn493 and Glu501 each coordinate Mn(2+).

It belongs to the terpene synthase family. In terms of assembly, homodimer. Mn(2+) serves as cofactor. The cofactor is Mg(2+). As to expression, expressed in peltate glandular trichomes. Present in flowers, leaves and stems.

The protein localises to the plastid. The protein resides in the chloroplast. The catalysed reaction is (2E)-geranyl diphosphate = (E)-beta-ocimene + diphosphate. It functions in the pathway secondary metabolite biosynthesis; terpenoid biosynthesis. In terms of biological role, involved in the biosynthesis of monoterpenes natural products. Monoterpene synthase that catalyzes mainly the formation of (E)-beta-ocimene and minor amounts of other monoterpenes (e.g. myrcene, (Z)-beta-ocimene, alpha- and gamma-terpinene) from geranyl diphosphate (GPP). The sequence is that of (E)-beta-ocimene synthase, chloroplastic from Origanum vulgare (Wild marjoram).